The following is a 505-amino-acid chain: Deoxyguanosinetriphosphate triphosphohydrolase (505 aa).

Positions 66–273 (RLTHSMEVQQ…MEAADDISYC (208 aa)) constitute an HD domain.

It belongs to the dGTPase family. Type 1 subfamily. As to quaternary structure, homotetramer. Mg(2+) is required as a cofactor.

The catalysed reaction is dGTP + H2O = 2'-deoxyguanosine + triphosphate + H(+). DGTPase preferentially hydrolyzes dGTP over the other canonical NTPs. The protein is Deoxyguanosinetriphosphate triphosphohydrolase of Shigella boydii serotype 4 (strain Sb227).